The chain runs to 483 residues: Siroheme synthase (483 aa).

The tract at residues 1-203 (MNYFPIFANL…RQNTLAEREL (203 aa)) is precorrin-2 dehydrogenase /sirohydrochlorin ferrochelatase. Residues 22–23 (AV) and 43–44 (KH) each bind NAD(+). Ser128 carries the phosphoserine modification. The segment at 214 to 483 (GFVSLVGAGP…LGTGQEQQAA (270 aa)) is uroporphyrinogen-III C-methyltransferase. Residue Pro223 coordinates S-adenosyl-L-methionine. The active-site Proton acceptor is Asp246. Residue Lys268 is the Proton donor of the active site. Residues 299–301 (GGD), Val304, 329–330 (TA), Met381, and Gly410 contribute to the S-adenosyl-L-methionine site.

The protein in the N-terminal section; belongs to the precorrin-2 dehydrogenase / sirohydrochlorin ferrochelatase family. It in the C-terminal section; belongs to the precorrin methyltransferase family.

The catalysed reaction is uroporphyrinogen III + 2 S-adenosyl-L-methionine = precorrin-2 + 2 S-adenosyl-L-homocysteine + H(+). The enzyme catalyses precorrin-2 + NAD(+) = sirohydrochlorin + NADH + 2 H(+). It carries out the reaction siroheme + 2 H(+) = sirohydrochlorin + Fe(2+). The protein operates within cofactor biosynthesis; adenosylcobalamin biosynthesis; precorrin-2 from uroporphyrinogen III: step 1/1. It participates in cofactor biosynthesis; adenosylcobalamin biosynthesis; sirohydrochlorin from precorrin-2: step 1/1. Its pathway is porphyrin-containing compound metabolism; siroheme biosynthesis; precorrin-2 from uroporphyrinogen III: step 1/1. It functions in the pathway porphyrin-containing compound metabolism; siroheme biosynthesis; siroheme from sirohydrochlorin: step 1/1. The protein operates within porphyrin-containing compound metabolism; siroheme biosynthesis; sirohydrochlorin from precorrin-2: step 1/1. Multifunctional enzyme that catalyzes the SAM-dependent methylations of uroporphyrinogen III at position C-2 and C-7 to form precorrin-2 via precorrin-1. Then it catalyzes the NAD-dependent ring dehydrogenation of precorrin-2 to yield sirohydrochlorin. Finally, it catalyzes the ferrochelation of sirohydrochlorin to yield siroheme. The sequence is that of Siroheme synthase from Neisseria meningitidis serogroup C / serotype 2a (strain ATCC 700532 / DSM 15464 / FAM18).